A 128-amino-acid polypeptide reads, in one-letter code: Early 3 14.7 kDa protein (128 aa).

Belongs to the adenoviridae E3_15 family. May bind to host IKBKG, OPTN and RRAGA.

The protein resides in the host cytoplasm. The protein localises to the host nucleus. Functionally, may prevent Nf-kappaB activation by immune signals like Tumor necrosis factor, presumably by inhibiting NFKB1 dimer DNA-binding. May act directly at the TNF receptor to inhibit signaling. The chain is Early 3 14.7 kDa protein from Human adenovirus C serotype 2 (HAdV-2).